The sequence spans 279 residues: Probable endonuclease 4 (279 aa).

Residues histidine 69, histidine 109, glutamate 145, aspartate 179, histidine 182, histidine 216, aspartate 229, histidine 231, and glutamate 261 each coordinate Zn(2+).

This sequence belongs to the AP endonuclease 2 family. Zn(2+) serves as cofactor.

The enzyme catalyses Endonucleolytic cleavage to 5'-phosphooligonucleotide end-products.. Functionally, endonuclease IV plays a role in DNA repair. It cleaves phosphodiester bonds at apurinic or apyrimidinic (AP) sites, generating a 3'-hydroxyl group and a 5'-terminal sugar phosphate. In Desulforapulum autotrophicum (strain ATCC 43914 / DSM 3382 / VKM B-1955 / HRM2) (Desulfobacterium autotrophicum), this protein is Probable endonuclease 4.